We begin with the raw amino-acid sequence, 483 residues long: Altronate oxidoreductase (483 aa).

18 to 29 (IIQFGEGNFLRA) is an NAD(+) binding site.

Belongs to the mannitol dehydrogenase family. UxaB subfamily.

The catalysed reaction is D-altronate + NAD(+) = keto-D-tagaturonate + NADH + H(+). The protein operates within carbohydrate metabolism; pentose and glucuronate interconversion. This chain is Altronate oxidoreductase, found in Escherichia coli O1:K1 / APEC.